The following is a 272-amino-acid chain: MNQYAVWGNPIAQSKSPRIHTLFGQQTGKAISYVAKLGDEQQFEQQLKQFFAEGAKGANITAPFKERAFALADLYSESCLQAEACNTLKRLDDGRLYADNTDGVGLVSDLARLGWPKPHQRILILGAGGATKGVLYPLLQAQQQITIYNRTADKAASLAKKFAKFGQIQSACFDELPEQSFDLIINATSLGLQGKCVELPARLLTQANIYDMQYAPNMQTPFLEYARSQGATQYQDGLGMLVGQAAYTFQLWEDVLPDVEPILKQIKQEMEF.

Shikimate contacts are provided by residues Ser-14–Ser-16 and Thr-61. Catalysis depends on Lys-65, which acts as the Proton acceptor. An NADP(+)-binding site is contributed by Glu-77. Asn-86 and Asp-102 together coordinate shikimate. NADP(+) is bound by residues Gly-126–Ala-130, Asn-149–Lys-154, and Met-212. Tyr-214 contributes to the shikimate binding site. Gly-237 serves as a coordination point for NADP(+).

The protein belongs to the shikimate dehydrogenase family. As to quaternary structure, homodimer.

The catalysed reaction is shikimate + NADP(+) = 3-dehydroshikimate + NADPH + H(+). The protein operates within metabolic intermediate biosynthesis; chorismate biosynthesis; chorismate from D-erythrose 4-phosphate and phosphoenolpyruvate: step 4/7. In terms of biological role, involved in the biosynthesis of the chorismate, which leads to the biosynthesis of aromatic amino acids. Catalyzes the reversible NADPH linked reduction of 3-dehydroshikimate (DHSA) to yield shikimate (SA). The chain is Shikimate dehydrogenase (NADP(+)) from Glaesserella parasuis serovar 5 (strain SH0165) (Haemophilus parasuis).